The sequence spans 663 residues: RING finger protein 145 (663 aa).

The next 14 membrane-spanning stretches (helical) occupy residues 53-73 (YLAL…LTLP), 77-97 (LVQL…HQIS), 123-143 (FTTA…VMKT), 146-166 (IWLF…VPLE), 168-188 (IVII…YFLG), 205-222 (LVQV…MSLW), 225-245 (LVVP…QIYS), 275-295 (YSLL…LTLC), 316-336 (TEGV…LQVV), 340-360 (FLLS…MLEI), 384-404 (SLCL…CQFF), 410-430 (LLII…TLFI), 460-480 (LLEF…TIFG), and 482-502 (WTVM…WLRA). A YLYF motif motif is present at residues 81 to 84 (YLYF). Residue C537 is part of the active site. An RING-type; atypical zinc finger spans residues 537-575 (CAICYQDMKSAVITPCSHFFHAGCLKKWLYVQDTCPLCH). A disordered region spans residues 587 to 663 (LGTEAAPQPP…EGEVCPVESA (77 aa)). Residues 619-628 (GTGTQEGSGD) are compositionally biased toward polar residues.

In terms of assembly, interacts (via YLYF motif) with INSIG1 and INSIG2.

Its subcellular location is the endoplasmic reticulum membrane. The catalysed reaction is S-ubiquitinyl-[E2 ubiquitin-conjugating enzyme]-L-cysteine + [acceptor protein]-L-lysine = [E2 ubiquitin-conjugating enzyme]-L-cysteine + N(6)-ubiquitinyl-[acceptor protein]-L-lysine.. Functionally, E3 ubiquitin ligase that catalyzes the direct transfer of ubiquitin from E2 ubiquitin-conjugating enzyme to a specific substrate. In response to bacterial infection, negatively regulates the phagocyte oxidative burst by controlling the turnover of the NADPH oxidase complex subunits. Promotes monoubiquitination of CYBA and 'Lys-48'-linked polyubiquitination and degradation of CYBB NADPH oxidase catalytic subunits, both essential for the generation of antimicrobial reactive oxygen species. Involved in the maintenance of cholesterol homeostasis. In response to high sterol concentrations ubiquitinates HMGCR, a rate-limiting enzyme in cholesterol biosynthesis, and targets it for degradation. The interaction with INSIG1 is required for this function. In addition, triggers ubiquitination of SCAP, likely inhibiting its transport to the Golgi apparatus and the subsequent processing/maturation of SREBPF2, ultimately down-regulating cholesterol biosynthesis. In Mus musculus (Mouse), this protein is RING finger protein 145.